Here is a 146-residue protein sequence, read N- to C-terminus: Ribonuclease H (146 aa).

In terms of domain architecture, RNase H type-1 spans 1-143 (MRKKIIIYTD…CDYLARQAIK (143 aa)). Aspartate 10, glutamate 48, aspartate 70, and aspartate 135 together coordinate Mg(2+).

The protein belongs to the RNase H family. As to quaternary structure, monomer. It depends on Mg(2+) as a cofactor.

It localises to the cytoplasm. It carries out the reaction Endonucleolytic cleavage to 5'-phosphomonoester.. Endonuclease that specifically degrades the RNA of RNA-DNA hybrids. The polypeptide is Ribonuclease H (Prosthecochloris aestuarii (strain DSM 271 / SK 413)).